The chain runs to 246 residues: Ribonuclease PH (246 aa).

Residues R91 and 129–131 (GTR) contribute to the phosphate site.

This sequence belongs to the RNase PH family. As to quaternary structure, homohexameric ring arranged as a trimer of dimers.

The enzyme catalyses tRNA(n+1) + phosphate = tRNA(n) + a ribonucleoside 5'-diphosphate. Phosphorolytic 3'-5' exoribonuclease that plays an important role in tRNA 3'-end maturation. Removes nucleotide residues following the 3'-CCA terminus of tRNAs; can also add nucleotides to the ends of RNA molecules by using nucleoside diphosphates as substrates, but this may not be physiologically important. Probably plays a role in initiation of 16S rRNA degradation (leading to ribosome degradation) during starvation. The sequence is that of Ribonuclease PH from Burkholderia ambifaria (strain ATCC BAA-244 / DSM 16087 / CCUG 44356 / LMG 19182 / AMMD) (Burkholderia cepacia (strain AMMD)).